The primary structure comprises 417 residues: MLKKDMNIADYDPELFKAIQNETLRQEEHIELIASENYTSPRVMEAQGSQLTNKYAEGYPGKRYYGGCEYVDVVETLAIERAKELFGATYANVQPHSGSQANSAVYMALLKPGDTVLGMNLAHGGHLTHGSPVNFSGKLYNIIPYGIDESGKIDYDEMERLAVEHKPKMMIGGFSAYSGIVDWAKMREIADKIGAYLFVDMAHVAGLIAAGVYPNPVPHAHVVTSTTHKTLAGPRGGVILSAADDEDLYKKLNSAVFPGGQGGPLMHVIAGKAVAFKEALEPEFKVYQQQVVNNAKAMVEVFLERGYKIVSGGTSNHLMLVDLIGRDLTGKEADAALGSANITVNKNSVPNDPRSPFVTSGVRIGTPAITRRGFKEVESKELTGWICDILDDASNPAVIERVKGQVLALCARFPVYG.

(6S)-5,6,7,8-tetrahydrofolate is bound by residues L121 and G125–L127. K229 is modified (N6-(pyridoxal phosphate)lysine). S355–F357 contacts (6S)-5,6,7,8-tetrahydrofolate.

This sequence belongs to the SHMT family. As to quaternary structure, homodimer. Pyridoxal 5'-phosphate is required as a cofactor.

The protein resides in the cytoplasm. The enzyme catalyses (6R)-5,10-methylene-5,6,7,8-tetrahydrofolate + glycine + H2O = (6S)-5,6,7,8-tetrahydrofolate + L-serine. The protein operates within one-carbon metabolism; tetrahydrofolate interconversion. It functions in the pathway amino-acid biosynthesis; glycine biosynthesis; glycine from L-serine: step 1/1. In terms of biological role, catalyzes the reversible interconversion of serine and glycine with tetrahydrofolate (THF) serving as the one-carbon carrier. This reaction serves as the major source of one-carbon groups required for the biosynthesis of purines, thymidylate, methionine, and other important biomolecules. Also exhibits THF-independent aldolase activity toward beta-hydroxyamino acids, producing glycine and aldehydes, via a retro-aldol mechanism. This is Serine hydroxymethyltransferase from Shewanella baltica (strain OS155 / ATCC BAA-1091).